The sequence spans 1280 residues: SET and MYND domain-containing protein DDB_G0284059 (1280 aa).

2 disordered regions span residues 1–35 (MTKK…SHNH) and 111–167 (INKI…QKQQ). 2 stretches are compositionally biased toward low complexity: residues 16–25 (NNNNNNNHGN) and 117–153 (ENSP…QSQP). 2 TPR repeats span residues 272–305 (SKGY…YDME) and 383–416 (HKLY…IEKR). The stretch at 439–468 (QKDEEIEQELDNKNNNSNDDEKQQQQQQQQ) forms a coiled coil. Zn(2+) is bound by residues C533, C536, C546, C549, C555, C559, H568, and C572. Residues 533–572 (CYNCFKEILSPIYCKECSNSQYCSNKCLNEDYVKQHGREC) form an MYND-type zinc finger. 4 disordered regions span residues 601 to 642 (ANKG…QNLN), 659 to 726 (ALSS…TTTT), 854 to 905 (QQQQ…PFSP), and 1039 to 1079 (AKLQ…LNNN). 5 stretches are compositionally biased toward low complexity: residues 659 to 697 (ALSS…SLTE), 712 to 726 (SSSS…TTTT), 854 to 898 (QQQQ…QNPP), 1042 to 1053 (QQQQQQQQQHQQ), and 1061 to 1079 (NSNP…LNNN). The SET domain occupies 822 to 965 (CQLTTYTFAI…KGEEILGCYG (144 aa)). The stretch at 1218–1251 (GREYSKLGQIYLTLGEIEKSEDAIEKAESILMSW) is one TPR 3 repeat.

Belongs to the class V-like SAM-binding methyltransferase superfamily.

Probable methyltransferase. The sequence is that of SET and MYND domain-containing protein DDB_G0284059 from Dictyostelium discoideum (Social amoeba).